Here is a 430-residue protein sequence, read N- to C-terminus: Glutamate-1-semialdehyde 2,1-aminomutase (430 aa).

At K267 the chain carries N6-(pyridoxal phosphate)lysine.

Belongs to the class-III pyridoxal-phosphate-dependent aminotransferase family. HemL subfamily. Homodimer. The cofactor is pyridoxal 5'-phosphate.

The protein localises to the cytoplasm. The catalysed reaction is (S)-4-amino-5-oxopentanoate = 5-aminolevulinate. It functions in the pathway porphyrin-containing compound metabolism; protoporphyrin-IX biosynthesis; 5-aminolevulinate from L-glutamyl-tRNA(Glu): step 2/2. In Lawsonia intracellularis (strain PHE/MN1-00), this protein is Glutamate-1-semialdehyde 2,1-aminomutase.